A 135-amino-acid chain; its full sequence is L-alanine exporter AlaE (135 aa).

The next 3 membrane-spanning stretches (helical) occupy residues 9–29 (VATV…IAGM), 75–95 (DILA…LIAG), and 96–116 (ASFA…ILLA).

It belongs to the AlaE exporter family.

The protein localises to the cell inner membrane. Functionally, exports L-alanine. This chain is L-alanine exporter AlaE, found in Cereibacter sphaeroides (strain ATCC 17023 / DSM 158 / JCM 6121 / CCUG 31486 / LMG 2827 / NBRC 12203 / NCIMB 8253 / ATH 2.4.1.) (Rhodobacter sphaeroides).